The chain runs to 1690 residues: DNA-directed RNA polymerase subunit beta' (1690 aa).

Residues C63, C65, C78, and C81 each coordinate Zn(2+). Positions 753, 755, and 757 each coordinate Mg(2+). Zn(2+) contacts are provided by C1107, C1295, C1302, and C1305.

This sequence belongs to the RNA polymerase beta' chain family. In terms of assembly, the RNAP catalytic core consists of 2 alpha, 1 beta, 1 beta' and 1 omega subunit. When a sigma factor is associated with the core the holoenzyme is formed, which can initiate transcription. Mg(2+) serves as cofactor. The cofactor is Zn(2+).

The enzyme catalyses RNA(n) + a ribonucleoside 5'-triphosphate = RNA(n+1) + diphosphate. Functionally, DNA-dependent RNA polymerase catalyzes the transcription of DNA into RNA using the four ribonucleoside triphosphates as substrates. The chain is DNA-directed RNA polymerase subunit beta' from Thermotoga petrophila (strain ATCC BAA-488 / DSM 13995 / JCM 10881 / RKU-1).